Reading from the N-terminus, the 240-residue chain is Ditrans,polycis-undecaprenyl-diphosphate synthase ((2E,6E)-farnesyl-diphosphate specific) (240 aa).

Residue aspartate 18 is part of the active site. Aspartate 18 provides a ligand contact to Mg(2+). Substrate-binding positions include 19 to 22, tryptophan 23, arginine 31, histidine 35, and 63 to 65; these read GNGR and SSE. Asparagine 66 acts as the Proton acceptor in catalysis. Substrate is bound by residues tryptophan 67, arginine 69, arginine 186, and 192–194; that span reads RIS. Mg(2+) is bound at residue glutamate 205.

It belongs to the UPP synthase family. In terms of assembly, homodimer. Mg(2+) serves as cofactor.

The catalysed reaction is 8 isopentenyl diphosphate + (2E,6E)-farnesyl diphosphate = di-trans,octa-cis-undecaprenyl diphosphate + 8 diphosphate. In terms of biological role, catalyzes the sequential condensation of isopentenyl diphosphate (IPP) with (2E,6E)-farnesyl diphosphate (E,E-FPP) to yield (2Z,6Z,10Z,14Z,18Z,22Z,26Z,30Z,34E,38E)-undecaprenyl diphosphate (di-trans,octa-cis-UPP). UPP is the precursor of glycosyl carrier lipid in the biosynthesis of bacterial cell wall polysaccharide components such as peptidoglycan and lipopolysaccharide. In Pasteurella multocida (strain Pm70), this protein is Ditrans,polycis-undecaprenyl-diphosphate synthase ((2E,6E)-farnesyl-diphosphate specific).